The chain runs to 160 residues: Phosphopantetheine adenylyltransferase (160 aa).

Thr-9 provides a ligand contact to substrate. ATP-binding positions include 9–10 (TF) and His-17. Substrate is bound by residues Lys-41, Leu-73, and Arg-87. ATP contacts are provided by residues 88-90 (GLR), Glu-98, and 123-129 (LSYISST).

Belongs to the bacterial CoaD family. Homohexamer. It depends on Mg(2+) as a cofactor.

Its subcellular location is the cytoplasm. The catalysed reaction is (R)-4'-phosphopantetheine + ATP + H(+) = 3'-dephospho-CoA + diphosphate. It functions in the pathway cofactor biosynthesis; coenzyme A biosynthesis; CoA from (R)-pantothenate: step 4/5. Its function is as follows. Reversibly transfers an adenylyl group from ATP to 4'-phosphopantetheine, yielding dephospho-CoA (dPCoA) and pyrophosphate. The chain is Phosphopantetheine adenylyltransferase from Marinobacter nauticus (strain ATCC 700491 / DSM 11845 / VT8) (Marinobacter aquaeolei).